Consider the following 357-residue polypeptide: Putative minor fimbrial subunit PmfE (357 aa).

The signal sequence occupies residues 1 to 28; the sequence is MILNKKNIHSKSVMLFCAGIVSLMPLHA.

The protein localises to the fimbrium. The protein is Putative minor fimbrial subunit PmfE (pmfE) of Proteus mirabilis (strain HI4320).